The chain runs to 246 residues: Large ribosomal subunit protein uL3 (246 aa).

Disordered regions lie at residues 140-162 and 215-246; these read SHRS…NKKM and DVPL…EENA. Position 151 is an N5-methylglutamine (glutamine 151). Low complexity predominate over residues 234 to 246; sequence EAAPEAPASEENA.

This sequence belongs to the universal ribosomal protein uL3 family. In terms of assembly, part of the 50S ribosomal subunit. Forms a cluster with proteins L14 and L19. In terms of processing, methylated by PrmB.

In terms of biological role, one of the primary rRNA binding proteins, it binds directly near the 3'-end of the 23S rRNA, where it nucleates assembly of the 50S subunit. The protein is Large ribosomal subunit protein uL3 of Methylorubrum extorquens (strain PA1) (Methylobacterium extorquens).